Here is a 69-residue protein sequence, read N- to C-terminus: Defensin-like protein 166 (69 aa).

The signal sequence occupies residues 1–15; it reads MIIVIIFLVIYFNNQ. Disulfide bonds link cysteine 19–cysteine 68, cysteine 24–cysteine 44, cysteine 29–cysteine 62, and cysteine 33–cysteine 64.

Belongs to the DEFL family.

It localises to the secreted. The polypeptide is Defensin-like protein 166 (Arabidopsis thaliana (Mouse-ear cress)).